The sequence spans 478 residues: Proline--tRNA ligase (478 aa).

It belongs to the class-II aminoacyl-tRNA synthetase family. ProS type 3 subfamily. Homodimer.

It localises to the cytoplasm. The enzyme catalyses tRNA(Pro) + L-proline + ATP = L-prolyl-tRNA(Pro) + AMP + diphosphate. In terms of biological role, catalyzes the attachment of proline to tRNA(Pro) in a two-step reaction: proline is first activated by ATP to form Pro-AMP and then transferred to the acceptor end of tRNA(Pro). This is Proline--tRNA ligase from Clostridium botulinum (strain 657 / Type Ba4).